The primary structure comprises 251 residues: Hydroxyacylglutathione hydrolase (251 aa).

Zn(2+) is bound by residues His-54, His-56, Asp-58, His-59, His-113, Asp-140, and His-178.

It belongs to the metallo-beta-lactamase superfamily. Glyoxalase II family. As to quaternary structure, monomer. Zn(2+) serves as cofactor.

It carries out the reaction an S-(2-hydroxyacyl)glutathione + H2O = a 2-hydroxy carboxylate + glutathione + H(+). It participates in secondary metabolite metabolism; methylglyoxal degradation; (R)-lactate from methylglyoxal: step 2/2. Its function is as follows. Thiolesterase that catalyzes the hydrolysis of S-D-lactoyl-glutathione to form glutathione and D-lactic acid. This chain is Hydroxyacylglutathione hydrolase, found in Synechococcus sp. (strain CC9902).